A 384-amino-acid polypeptide reads, in one-letter code: MRWVLPDHIQDALPSEAASLEALRRRLLDAFRVRGYQLVMPPLLEYLDSLTTGAGQDLKLRTFKLVDQVSGRTMGVRADMTPQVTRIDAHLLNRAGVSRLCYCGSVLHTLPSTLTATREPLQLGAELYGHAGIDADIEIVRLLADVLRLAEVPASRIDIGHVGLFHALAALAGMVPEREEELFDLLQAKDVPGLKEITVGVAEPVRTALLRLPALYGGAEVIDEAAACMPESAEIRAALDDLRRLAAALEDLPISFDLADLRGYHYHSGVVFAAYGGGSPAALALGGRYDRVGEAFGRARPATGFSLDLRELALRLPAAVVPGAILAPLEGTAGLAAAVEALRAAGEAVMSRLPGHEGTWNDAGCDRQLVMRQGAWVVEPLQGE.

This sequence belongs to the class-II aminoacyl-tRNA synthetase family. HisZ subfamily. In terms of assembly, heteromultimer composed of HisG and HisZ subunits.

Its subcellular location is the cytoplasm. It functions in the pathway amino-acid biosynthesis; L-histidine biosynthesis; L-histidine from 5-phospho-alpha-D-ribose 1-diphosphate: step 1/9. Its function is as follows. Required for the first step of histidine biosynthesis. May allow the feedback regulation of ATP phosphoribosyltransferase activity by histidine. The chain is ATP phosphoribosyltransferase regulatory subunit from Azoarcus sp. (strain BH72).